The following is a 184-amino-acid chain: Protein GrpE (184 aa).

Residues 1-32 (MEEQKQTPSTPTPDTAAEAAVNAATAAPETAG) are disordered. The span at 12–32 (TPDTAAEAAVNAATAAPETAG) shows a compositional bias: low complexity.

The protein belongs to the GrpE family. Homodimer.

The protein resides in the cytoplasm. Functionally, participates actively in the response to hyperosmotic and heat shock by preventing the aggregation of stress-denatured proteins, in association with DnaK and GrpE. It is the nucleotide exchange factor for DnaK and may function as a thermosensor. Unfolded proteins bind initially to DnaJ; upon interaction with the DnaJ-bound protein, DnaK hydrolyzes its bound ATP, resulting in the formation of a stable complex. GrpE releases ADP from DnaK; ATP binding to DnaK triggers the release of the substrate protein, thus completing the reaction cycle. Several rounds of ATP-dependent interactions between DnaJ, DnaK and GrpE are required for fully efficient folding. This chain is Protein GrpE, found in Cupriavidus pinatubonensis (strain JMP 134 / LMG 1197) (Cupriavidus necator (strain JMP 134)).